The following is a 336-amino-acid chain: Fructose-1,6-bisphosphatase class 1 (336 aa).

Mg(2+)-binding residues include E98, D117, L119, and D120. Residues 120-123 (DGSS), N210, and K276 contribute to the substrate site. E282 lines the Mg(2+) pocket.

This sequence belongs to the FBPase class 1 family. In terms of assembly, homotetramer. Mg(2+) is required as a cofactor.

It localises to the cytoplasm. It catalyses the reaction beta-D-fructose 1,6-bisphosphate + H2O = beta-D-fructose 6-phosphate + phosphate. It functions in the pathway carbohydrate biosynthesis; gluconeogenesis. The sequence is that of Fructose-1,6-bisphosphatase class 1 from Caulobacter vibrioides (strain ATCC 19089 / CIP 103742 / CB 15) (Caulobacter crescentus).